The primary structure comprises 290 residues: Phosphatidylglycerol--prolipoprotein diacylglyceryl transferase (290 aa).

The next 7 helical transmembrane spans lie at 21-41, 60-80, 96-116, 130-150, 198-218, 225-245, and 258-278; these read VSLH…MWLA, LLYA…VLFY, WDGG…MFWF, FIAP…FING, SQLY…NLFI, GAVS…VEAF, and VISM…IMMI. A 1,2-diacyl-sn-glycero-3-phospho-(1'-sn-glycerol) is bound at residue Arg143.

This sequence belongs to the Lgt family.

It is found in the cell inner membrane. It catalyses the reaction L-cysteinyl-[prolipoprotein] + a 1,2-diacyl-sn-glycero-3-phospho-(1'-sn-glycerol) = an S-1,2-diacyl-sn-glyceryl-L-cysteinyl-[prolipoprotein] + sn-glycerol 1-phosphate + H(+). Its pathway is protein modification; lipoprotein biosynthesis (diacylglyceryl transfer). In terms of biological role, catalyzes the transfer of the diacylglyceryl group from phosphatidylglycerol to the sulfhydryl group of the N-terminal cysteine of a prolipoprotein, the first step in the formation of mature lipoproteins. This Serratia proteamaculans (strain 568) protein is Phosphatidylglycerol--prolipoprotein diacylglyceryl transferase.